The following is a 168-amino-acid chain: ATP synthase subunit b (168 aa).

A helical transmembrane segment spans residues 9–29 (SIPFGTIAYTLFIFLLLLVML).

The protein belongs to the ATPase B chain family. F-type ATPases have 2 components, F(1) - the catalytic core - and F(0) - the membrane proton channel. F(1) has five subunits: alpha(3), beta(3), gamma(1), delta(1), epsilon(1). F(0) has three main subunits: a(1), b(2) and c(10-14). The alpha and beta chains form an alternating ring which encloses part of the gamma chain. F(1) is attached to F(0) by a central stalk formed by the gamma and epsilon chains, while a peripheral stalk is formed by the delta and b chains.

It localises to the cell membrane. Functionally, f(1)F(0) ATP synthase produces ATP from ADP in the presence of a proton or sodium gradient. F-type ATPases consist of two structural domains, F(1) containing the extramembraneous catalytic core and F(0) containing the membrane proton channel, linked together by a central stalk and a peripheral stalk. During catalysis, ATP synthesis in the catalytic domain of F(1) is coupled via a rotary mechanism of the central stalk subunits to proton translocation. Component of the F(0) channel, it forms part of the peripheral stalk, linking F(1) to F(0). This Bacillus cereus (strain B4264) protein is ATP synthase subunit b.